We begin with the raw amino-acid sequence, 255 residues long: GTP cyclohydrolase FolE2 (255 aa).

It belongs to the GTP cyclohydrolase IV family.

It catalyses the reaction GTP + H2O = 7,8-dihydroneopterin 3'-triphosphate + formate + H(+). The protein operates within cofactor biosynthesis; 7,8-dihydroneopterin triphosphate biosynthesis; 7,8-dihydroneopterin triphosphate from GTP: step 1/1. Converts GTP to 7,8-dihydroneopterin triphosphate. The sequence is that of GTP cyclohydrolase FolE2 from Syntrophus aciditrophicus (strain SB).